We begin with the raw amino-acid sequence, 116 residues long: NADH-ubiquinone oxidoreductase chain 3 (116 aa).

3 helical membrane passes run Leu3–Phe23, Phe56–Leu76, and Leu87–Trp107.

The protein belongs to the complex I subunit 3 family.

Its subcellular location is the mitochondrion membrane. It catalyses the reaction a ubiquinone + NADH + 5 H(+)(in) = a ubiquinol + NAD(+) + 4 H(+)(out). In terms of biological role, core subunit of the mitochondrial membrane respiratory chain NADH dehydrogenase (Complex I) that is believed to belong to the minimal assembly required for catalysis. Complex I functions in the transfer of electrons from NADH to the respiratory chain. The immediate electron acceptor for the enzyme is believed to be ubiquinone. This Gadus morhua (Atlantic cod) protein is NADH-ubiquinone oxidoreductase chain 3 (MT-ND3).